Consider the following 315-residue polypeptide: Porphobilinogen deaminase (315 aa).

Cys238 bears the S-(dipyrrolylmethanemethyl)cysteine mark.

It belongs to the HMBS family. In terms of assembly, monomer. It depends on dipyrromethane as a cofactor.

It carries out the reaction 4 porphobilinogen + H2O = hydroxymethylbilane + 4 NH4(+). It functions in the pathway porphyrin-containing compound metabolism; protoporphyrin-IX biosynthesis; coproporphyrinogen-III from 5-aminolevulinate: step 2/4. In terms of biological role, tetrapolymerization of the monopyrrole PBG into the hydroxymethylbilane pre-uroporphyrinogen in several discrete steps. The polypeptide is Porphobilinogen deaminase (Albidiferax ferrireducens (strain ATCC BAA-621 / DSM 15236 / T118) (Rhodoferax ferrireducens)).